Reading from the N-terminus, the 95-residue chain is Small ribosomal subunit protein uS19 (95 aa).

The interval 76 to 95 (PTRRFGGHADKKAKKGELKK) is disordered. Residues 82–95 (GHADKKAKKGELKK) are compositionally biased toward basic and acidic residues.

It belongs to the universal ribosomal protein uS19 family.

Its function is as follows. Protein S19 forms a complex with S13 that binds strongly to the 16S ribosomal RNA. This chain is Small ribosomal subunit protein uS19, found in Thermotoga neapolitana (strain ATCC 49049 / DSM 4359 / NBRC 107923 / NS-E).